We begin with the raw amino-acid sequence, 668 residues long: Tastin (668 aa).

Disordered stretches follow at residues 1-102, 154-177, and 189-285; these read MTTL…GGSN, ERKG…PRIP, and FSRL…GRHH. The residue at position 16 (serine 16) is a Phosphoserine. 2 stretches are compositionally biased toward polar residues: residues 27–37 and 55–64; these read QRCQDFSSVKS and PRSTQRQRPL. Serine 97 is modified (phosphoserine). Residues 158–168 are compositionally biased toward polar residues; it reads GTTQRGQSARS. Phosphoserine is present on serine 169. Basic and acidic residues-rich tracts occupy residues 227-246 and 269-282; these read ELRR…DRRT and GEQE…DGGG. Phosphoserine occurs at positions 306, 324, and 338. 2 disordered regions span residues 364-392 and 462-502; these read ITLQ…HQEL and TEPL…AEPE.

In terms of assembly, directly binds bystin, and indirectly trophinin.

The protein localises to the cytoplasm. In terms of biological role, could be involved with bystin and trophinin in a cell adhesion molecule complex that mediates an initial attachment of the blastocyst to uterine epithelial cells at the time of the embryo implantation. The protein is Tastin of Mus musculus (Mouse).